The primary structure comprises 104 residues: Protein RnfH (104 aa).

This sequence belongs to the UPF0125 (RnfH) family.

This is Protein RnfH from Pseudomonas fluorescens (strain Pf0-1).